The chain runs to 223 residues: MPWAAGRRWAWITLILTIIAVLIQAAWLWLGTQNFVFSREEIAQLARQYAGLDHELAFSRLIVELRRLHPGHVLPDEELQWVFVNAGGWMGAMCILHASLSEYVLLFGTALGSHGHSGRYWAEISDTIISGTFHQWKEGTTKSEVFYPGETVVHGPGEATALEWGPNTWMVEYGRGVIPSTLFFALADTFFSTQDYLTLFYTLRAYARGLRLELTTYLFGQDS.

The Lumenal portion of the chain corresponds to 1–9 (MPWAAGRRW). Positions 2-8 (PWAAGRR) are targeting to endoplasmic reticulum-associated lipid droplets. Residues 10-30 (AWITLILTIIAVLIQAAWLWL) traverse the membrane as a helical segment. Over 31 to 223 (GTQNFVFSRE…LTTYLFGQDS (193 aa)) the chain is Cytoplasmic. The tract at residues 99 to 106 (SLSEYVLL) is important for ligand-binding. Positions 177-223 (VIPSTLFFALADTFFSTQDYLTLFYTLRAYARGLRLELTTYLFGQDS) are C-terminal hydrophobic region.

This sequence belongs to the ERG2 family. As to quaternary structure, homotrimer. Interacts with KCNA4. Interacts with KCNA2; cocaine consumption leads to increased interaction. Forms a ternary complex with ANK2 and ITPR3. The complex is disrupted by agonists. Interacts with RNF112 in an oxidative stress-regulated manner. In terms of tissue distribution, widely expressed with higher expression in liver, brain, kidney and thymus. Expressed throughout the brain with higher expression within cerebral cortex, hippocampus and cerebellum. Within the hippocampus expressed in cornu ammonis pyramidal neurons, the granular cells of the dentate gyrus as well as interneurons. Within the cerebellum, expressed in Purkinje cell bodies. Highly expressed in the brainstem and motor neurons of the spinal cord. Expressed by neural retina, retinal pigment epithelial cells and lens.

It localises to the nucleus inner membrane. It is found in the nucleus outer membrane. Its subcellular location is the nucleus envelope. The protein localises to the cytoplasmic vesicle. The protein resides in the endoplasmic reticulum membrane. It localises to the membrane. It is found in the lipid droplet. Its subcellular location is the cell junction. The protein localises to the cell membrane. The protein resides in the cell projection. It localises to the growth cone. It is found in the postsynaptic density membrane. Its function is as follows. Functions in lipid transport from the endoplasmic reticulum and is involved in a wide array of cellular functions probably through regulation of the biogenesis of lipid microdomains at the plasma membrane. Involved in the regulation of different receptors it plays a role in BDNF signaling and EGF signaling. Also regulates ion channels like the potassium channel and could modulate neurotransmitter release. Plays a role in calcium signaling through modulation together with ANK2 of the ITP3R-dependent calcium efflux at the endoplasmic reticulum. Plays a role in several other cell functions including proliferation, survival and death. Originally identified for its ability to bind various psychoactive drugs it is involved in learning processes, memory and mood alteration. Necessary for proper mitochondrial axonal transport in motor neurons, in particular the retrograde movement of mitochondria. Plays a role in protecting cells against oxidative stress-induced cell death via its interaction with RNF112. The chain is Sigma non-opioid intracellular receptor 1 (Sigmar1) from Mus musculus (Mouse).